An 86-amino-acid chain; its full sequence is Cell division topological specificity factor (86 aa).

This sequence belongs to the MinE family.

In terms of biological role, prevents the cell division inhibition by proteins MinC and MinD at internal division sites while permitting inhibition at polar sites. This ensures cell division at the proper site by restricting the formation of a division septum at the midpoint of the long axis of the cell. The polypeptide is Cell division topological specificity factor (Shewanella halifaxensis (strain HAW-EB4)).